The sequence spans 503 residues: Aspartyl/glutamyl-tRNA(Asn/Gln) amidotransferase subunit B (503 aa).

It belongs to the GatB/GatE family. GatB subfamily. In terms of assembly, heterotrimer of A, B and C subunits.

It carries out the reaction L-glutamyl-tRNA(Gln) + L-glutamine + ATP + H2O = L-glutaminyl-tRNA(Gln) + L-glutamate + ADP + phosphate + H(+). It catalyses the reaction L-aspartyl-tRNA(Asn) + L-glutamine + ATP + H2O = L-asparaginyl-tRNA(Asn) + L-glutamate + ADP + phosphate + 2 H(+). Allows the formation of correctly charged Asn-tRNA(Asn) or Gln-tRNA(Gln) through the transamidation of misacylated Asp-tRNA(Asn) or Glu-tRNA(Gln) in organisms which lack either or both of asparaginyl-tRNA or glutaminyl-tRNA synthetases. The reaction takes place in the presence of glutamine and ATP through an activated phospho-Asp-tRNA(Asn) or phospho-Glu-tRNA(Gln). This Cereibacter sphaeroides (strain ATCC 17029 / ATH 2.4.9) (Rhodobacter sphaeroides) protein is Aspartyl/glutamyl-tRNA(Asn/Gln) amidotransferase subunit B.